The following is a 769-amino-acid chain: Spastin (769 aa).

A disordered region spans residues 1-100 (MVRTKNQSSS…TSGNVPRGGQ (100 aa)). At 1–113 (MVRTKNQSSS…KQNLYVVSFP (113 aa)) the chain is on the cytoplasmic side. The segment at 1–201 (MVRTKNQSSS…QTLEMAASRG (201 aa)) is required for localization to punctate cytoplasmic foci. Low complexity predominate over residues 8–19 (SSSSSASSSTKS). Residues 24-33 (SGGGGGGGGS) are compositionally biased toward gly residues. Residues 54-63 (SSKLSSNRQR) show a composition bias toward polar residues. The segment covering 64-78 (TTTTITTTTTTPGSS) has biased composition (low complexity). The segment at residues 114–134 (IIFLFNVLRSLIYQLFCIFRY) is an intramembrane region (helical). At 135-769 (LYGASTKVIY…WSQDYGDITI (635 aa)) the chain is on the cytoplasmic side. A sufficient for interaction with microtubules and microtubule severing region spans residues 199–769 (SRGGTGAGGY…WSQDYGDITI (571 aa)). The MIT domain maps to 224–299 (HRRAFEYISK…SMARDRLHFL (76 aa)). The tract at residues 314-462 (KEQPKKQLPH…NAASGSGSGA (149 aa)) is disordered. Low complexity predominate over residues 334 to 344 (TTTSSGSSSSS). Composition is skewed to polar residues over residues 395–413 (NKSQTLPRNLGSKTTSTSV) and 434–450 (QFSSGRNTPPQRSRTPI). Residues 451 to 462 (NNNAASGSGSGA) show a composition bias toward low complexity. Positions 452–466 (NNAASGSGSGASTPL) are required for interaction with microtubules. 534–541 (GPPGNGKT) provides a ligand contact to ATP.

The protein belongs to the AAA ATPase family. Spastin subfamily. In terms of assembly, homohexamer. The homohexamer is stabilized by ATP-binding. The homohexamer may adopt a ring conformation through which microtubules pass prior to being severed. Interacts with microtubules. Interacts with atl; may be involved in microtubule dynamics.

It localises to the membrane. The protein resides in the cytoplasm. It is found in the cytoskeleton. Its subcellular location is the microtubule organizing center. The protein localises to the centrosome. It localises to the chromosome. The protein resides in the lipid droplet. It catalyses the reaction n ATP + n H2O + a microtubule = n ADP + n phosphate + (n+1) alpha/beta tubulin heterodimers.. In terms of biological role, ATP-dependent microtubule severing protein. Stimulates microtubule minus-end depolymerization and poleward microtubule flux in the mitotic spindle. Regulates microtubule stability in the neuromuscular junction synapse. Involved in lipid metabolism by regulating the size and distribution of lipid droplets. Involved in axon regeneration by regulating microtubule severing. This chain is Spastin, found in Drosophila virilis (Fruit fly).